Here is a 123-residue protein sequence, read N- to C-terminus: Ribonuclease P protein component (123 aa).

It belongs to the RnpA family. In terms of assembly, consists of a catalytic RNA component (M1 or rnpB) and a protein subunit.

It catalyses the reaction Endonucleolytic cleavage of RNA, removing 5'-extranucleotides from tRNA precursor.. RNaseP catalyzes the removal of the 5'-leader sequence from pre-tRNA to produce the mature 5'-terminus. It can also cleave other RNA substrates such as 4.5S RNA. The protein component plays an auxiliary but essential role in vivo by binding to the 5'-leader sequence and broadening the substrate specificity of the ribozyme. The chain is Ribonuclease P protein component from Streptomyces avermitilis (strain ATCC 31267 / DSM 46492 / JCM 5070 / NBRC 14893 / NCIMB 12804 / NRRL 8165 / MA-4680).